Consider the following 132-residue polypeptide: Small ribosomal subunit protein bS6 (132 aa).

Residues 96–132 form a disordered region; the sequence is HAEGPSIQMQKRDERERGDRGDRPDRGDRGERGGFRR. The segment covering 105-132 has biased composition (basic and acidic residues); sequence QKRDERERGDRGDRPDRGDRGERGGFRR.

The protein belongs to the bacterial ribosomal protein bS6 family.

Its function is as follows. Binds together with bS18 to 16S ribosomal RNA. The protein is Small ribosomal subunit protein bS6 of Cereibacter sphaeroides (strain ATCC 17025 / ATH 2.4.3) (Rhodobacter sphaeroides).